The chain runs to 158 residues: MLNIANTIRSTLLRSKTRNVRTLAATVNPAEQQQVQAVLPDKLYSSIEIEYRGHDKAVLKSYTTFLQQVCKHLEIPQGRLEVLPYIRWVQPALRSKFVHKKYKLHYETRTHITKLEILNVTGSTASTFLEYIERNIPEGVGMRVGFTELQPLPLTIQN.

This sequence belongs to the universal ribosomal protein uS10 family.

It localises to the mitochondrion. The polypeptide is Small ribosomal subunit protein uS10m (mrps-10) (Caenorhabditis briggsae).